Reading from the N-terminus, the 342-residue chain is MLREALRKAAAGEPLSEGEAERALETIMEGGASPEATAALLTALRVRGESVQEIVGFARAMRRFAARVRAPEGVVDTCGTGGDAKGTINVSTAAAFVARGAGVVIAKHGNRAATSRAGSADVLEALGAAIELSPEQVSRCIEEAGIGFMFARTHHPAMRHVAPVRAELPFRTVFNLLGPLTNPAGARRQLVGVFSAGYVRPMAEALEGLGAERALVVHGRDGMDEITVTGPTLVAEVGGGGVEEYEISPEDFGLSRHAPDGLLGGDAHLNARILRDVLSGEERGASRDVIVLNAGAAIYVAGKAPSIEEGVRLAEGSLESGAALAALERFVRVSRRLAGRGA.

5-phospho-alpha-D-ribose 1-diphosphate contacts are provided by residues Gly79, Gly82–Asp83, Thr87, Asn89–Thr92, Lys107–Ser115, and Ser119. Gly79 serves as a coordination point for anthranilate. Ser91 contacts Mg(2+). An anthranilate-binding site is contributed by Asn110. Arg165 provides a ligand contact to anthranilate. Mg(2+) contacts are provided by Asp224 and Glu225.

It belongs to the anthranilate phosphoribosyltransferase family. In terms of assembly, homodimer. Requires Mg(2+) as cofactor.

The enzyme catalyses N-(5-phospho-beta-D-ribosyl)anthranilate + diphosphate = 5-phospho-alpha-D-ribose 1-diphosphate + anthranilate. It functions in the pathway amino-acid biosynthesis; L-tryptophan biosynthesis; L-tryptophan from chorismate: step 2/5. Functionally, catalyzes the transfer of the phosphoribosyl group of 5-phosphorylribose-1-pyrophosphate (PRPP) to anthranilate to yield N-(5'-phosphoribosyl)-anthranilate (PRA). The protein is Anthranilate phosphoribosyltransferase of Rubrobacter xylanophilus (strain DSM 9941 / JCM 11954 / NBRC 16129 / PRD-1).